The sequence spans 266 residues: Manganese catalase (266 aa).

Position 35 (Glu35) interacts with Mn(2+). Residues Asp57 and Asp61 each contribute to the Ca(2+) site. Residues Glu66, His69, Glu148, and His181 each coordinate Mn(2+). Asn218, Ser220, and Gly222 together coordinate Ca(2+). The tract at residues 243–266 (ENPEAMGGIPHIKPGDPRLHNHQG) is disordered. Basic and acidic residues predominate over residues 255 to 266 (KPGDPRLHNHQG).

Belongs to the manganese catalase family. In terms of assembly, homohexamer. It depends on Ca(2+) as a cofactor. The cofactor is Mn(2+).

The enzyme catalyses 2 H2O2 = O2 + 2 H2O. In terms of biological role, catalyzes the decomposition of hydrogen peroxide into water and oxygen. In Lactiplantibacillus plantarum (Lactobacillus plantarum), this protein is Manganese catalase.